Consider the following 1012-residue polypeptide: Ubiquitin-activating enzyme E1 1 (1012 aa).

Position 22 (Arg-22) interacts with ATP. A Phosphoserine modification is found at Ser-264. Ala-437 and Asp-463 together coordinate ATP. Positions 465 and 468 each coordinate Mg(2+). Asn-471, Arg-474, Lys-487, Val-513, Asp-537, and Asn-538 together coordinate ATP. Asp-537 serves as a coordination point for Mg(2+). Lys-588 participates in a covalent cross-link: Glycyl lysine isopeptide (Lys-Gly) (interchain with G-Cter in ubiquitin). Residue Cys-593 is the Glycyl thioester intermediate of the active site. A Phosphoserine modification is found at Ser-903.

Belongs to the ubiquitin-activating E1 family. Monomer. Interacts with the E2 ubiquitin-conjugating enzyme ubc4.

Its subcellular location is the cytoplasm. The protein localises to the nucleus. It carries out the reaction ATP + ubiquitin + [E1 ubiquitin-activating enzyme]-L-cysteine = AMP + diphosphate + S-ubiquitinyl-[E1 ubiquitin-activating enzyme]-L-cysteine.. It functions in the pathway protein modification; protein ubiquitination. With respect to regulation, ubiquitin transfer between the E1 ubiquitin-activating enzyme ptr3 and E2 ubiquitin-conjugating enzyme ubc4 is enhanced by the presence of magnesium and ATP, or adenylated ubiquitin. Functionally, E1 ubiquitin-activating enzyme that catalyzes the first step in ubiquitin conjugation to mark cellular proteins for degradation through the ubiquitin-proteasome system. Activates ubiquitin by first adenylating its C-terminal glycine residue with ATP, and thereafter linking this residue to the side chain of a cysteine residue in E1, yielding a ubiquitin-E1 thioester and free AMP. The protein is Ubiquitin-activating enzyme E1 1 (ptr3) of Schizosaccharomyces pombe (strain 972 / ATCC 24843) (Fission yeast).